The primary structure comprises 432 residues: Probable M18 family aminopeptidase 2 (432 aa).

The Zn(2+) site is built by histidine 86, histidine 157, and histidine 408.

This sequence belongs to the peptidase M18 family. Zn(2+) serves as cofactor.

This is Probable M18 family aminopeptidase 2 (apeB) from Streptomyces coelicolor (strain ATCC BAA-471 / A3(2) / M145).